A 339-amino-acid polypeptide reads, in one-letter code: Phenylalanine--tRNA ligase alpha subunit (339 aa).

Glutamate 254 contributes to the Mg(2+) binding site.

Belongs to the class-II aminoacyl-tRNA synthetase family. Phe-tRNA synthetase alpha subunit type 1 subfamily. As to quaternary structure, tetramer of two alpha and two beta subunits. Mg(2+) serves as cofactor.

It localises to the cytoplasm. It catalyses the reaction tRNA(Phe) + L-phenylalanine + ATP = L-phenylalanyl-tRNA(Phe) + AMP + diphosphate + H(+). In Clostridium botulinum (strain 657 / Type Ba4), this protein is Phenylalanine--tRNA ligase alpha subunit.